We begin with the raw amino-acid sequence, 957 residues long: SH3 domain-binding protein 4 (957 aa).

The SH3 1 domain maps to 54-113; that stretch reads DNVKEVVAIKDYCPNNFTTLKFSKGEHLYVLDTSGGEWWYAHNTTEMGYIPSSYVQPLNY. A ZU5 domain is found at 312 to 449; that stretch reads TSIVCRLDSS…LEPVMYVVMV (138 aa). Positions 649-719 constitute an SH3 2 domain; the sequence is TSLKYGKLLK…HAKNVLVVGK (71 aa).

As to quaternary structure, homodimer or homooligomer.

It is found in the membrane. Its subcellular location is the clathrin-coated pit. It localises to the cytoplasmic vesicle. The protein resides in the clathrin-coated vesicle. The protein localises to the nucleus. Functionally, possible role in regulating endocytosis of the transferrin receptor at the plasma membrane. Alternatively, may function as a negative regulator of the amino acid-induced TOR signaling by inhibiting the formation of active Rag GTPase complexes. Preferentially binds inactive Rag GTPase complexes and prevents their interaction with the mTORC1 complex inhibiting its relocalization to lysosomes and its activation. Thereby, may indirectly regulate cell growth, proliferation and autophagy. The chain is SH3 domain-binding protein 4 (sh3bp4) from Xenopus tropicalis (Western clawed frog).